The following is a 253-amino-acid chain: Electron transfer flavoprotein subunit beta, mitochondrial (253 aa).

Belongs to the ETF beta-subunit/FixA family. In terms of assembly, heterodimer of an alpha and a beta subunit. FAD is required as a cofactor. Requires AMP as cofactor.

The protein localises to the mitochondrion matrix. Its function is as follows. The electron transfer flavoprotein serves as a specific electron acceptor for several dehydrogenases, including five acyl-CoA dehydrogenases, glutaryl-CoA and sarcosine dehydrogenase. It transfers the electrons to the main mitochondrial respiratory chain via ETF-ubiquinone oxidoreductase (ETF dehydrogenase). This Oryza sativa subsp. japonica (Rice) protein is Electron transfer flavoprotein subunit beta, mitochondrial (ETFB).